The sequence spans 82 residues: Large ribosomal subunit protein uL23 (82 aa).

The protein belongs to the universal ribosomal protein uL23 family. Part of the 50S ribosomal subunit. Contacts protein L29.

Binds to 23S rRNA. One of the proteins that surrounds the polypeptide exit tunnel on the outside of the ribosome. This is Large ribosomal subunit protein uL23 from Methanospirillum hungatei JF-1 (strain ATCC 27890 / DSM 864 / NBRC 100397 / JF-1).